Here is a 418-residue protein sequence, read N- to C-terminus: Probable cysteine desulfurase (418 aa).

K236 is subject to N6-(pyridoxal phosphate)lysine. Catalysis depends on C376, which acts as the Cysteine persulfide intermediate.

This sequence belongs to the class-V pyridoxal-phosphate-dependent aminotransferase family. Csd subfamily. Requires pyridoxal 5'-phosphate as cofactor.

The enzyme catalyses (sulfur carrier)-H + L-cysteine = (sulfur carrier)-SH + L-alanine. Its function is as follows. Catalyzes the removal of elemental sulfur and selenium atoms from L-cysteine, L-cystine, L-selenocysteine, and L-selenocystine to produce L-alanine. This is Probable cysteine desulfurase (csd) from Streptomyces coelicolor (strain ATCC BAA-471 / A3(2) / M145).